We begin with the raw amino-acid sequence, 33 residues long: DELTA-pseudomyrmecitoxin-Pp1a subunit B (33 aa).

Heterodimer composed of subunit A and subunit B (DELTA-PSDTX-Pp1a); disulfide-linked. Expressed by the venom gland.

Its subcellular location is the secreted. This heterodimer has insecticidal and cytotoxic properties. Induces immediate paralysis when injected into blowflies (Lucilia cuprina), and then death within 24 hours. Also inhibits the growth of Aedes albopictus mosquito C6/36 cells. The chain is DELTA-pseudomyrmecitoxin-Pp1a subunit B from Pseudomyrmex penetrator (Ant).